Here is a 447-residue protein sequence, read N- to C-terminus: ATP-dependent protease ATPase subunit HslU (447 aa).

ATP-binding positions include I18, 60-65, D259, E325, and R397; that span reads GVGKTE.

This sequence belongs to the ClpX chaperone family. HslU subfamily. In terms of assembly, a double ring-shaped homohexamer of HslV is capped on each side by a ring-shaped HslU homohexamer. The assembly of the HslU/HslV complex is dependent on binding of ATP.

It is found in the cytoplasm. In terms of biological role, ATPase subunit of a proteasome-like degradation complex; this subunit has chaperone activity. The binding of ATP and its subsequent hydrolysis by HslU are essential for unfolding of protein substrates subsequently hydrolyzed by HslV. HslU recognizes the N-terminal part of its protein substrates and unfolds these before they are guided to HslV for hydrolysis. This chain is ATP-dependent protease ATPase subunit HslU, found in Burkholderia pseudomallei (strain K96243).